Here is a 160-residue protein sequence, read N- to C-terminus: Large ribosomal subunit protein uL22c (160 aa).

Belongs to the universal ribosomal protein uL22 family. Part of the 50S ribosomal subunit.

It localises to the plastid. The protein resides in the chloroplast. Functionally, this protein binds specifically to 23S rRNA. The globular domain of the protein is located near the polypeptide exit tunnel on the outside of the subunit, while an extended beta-hairpin is found that lines the wall of the exit tunnel in the center of the 70S ribosome. The protein is Large ribosomal subunit protein uL22c (rpl22) of Eucalyptus globulus subsp. globulus (Tasmanian blue gum).